An 83-amino-acid polypeptide reads, in one-letter code: Large ribosomal subunit protein bL31B (83 aa).

It belongs to the bacterial ribosomal protein bL31 family. Type B subfamily. In terms of assembly, part of the 50S ribosomal subunit.

The polypeptide is Large ribosomal subunit protein bL31B (Bacteroides fragilis (strain ATCC 25285 / DSM 2151 / CCUG 4856 / JCM 11019 / LMG 10263 / NCTC 9343 / Onslow / VPI 2553 / EN-2)).